The sequence spans 134 residues: Bradykinin-related peptides (134 aa).

An N-terminal signal peptide occupies residues 1–22 (MAFLKKSLFLVLFLGVVSLSFC). 3 propeptides span residues 23–44 (EEEKREEHEEEKRDEEDAESLG), 71–82 (RSISGLTPIRLS), and 99–121 (ISEADPGFTPSFVVIKGLSPLRG). The segment covering 24-33 (EEKREEHEEE) has biased composition (basic and acidic residues). The disordered stretch occupies residues 24–71 (EEKREEHEEEKRDEEDAESLGKRYGGLSPLRISKRVPPGFTPFRSPAR). Proline 126 is modified (4-hydroxyproline; partial; in form [Hyp3]-bradykinin and [Hyp3]-bradykinin-Val,Asp).

Belongs to the frog skin active peptide (FSAP) family. Bradykinin-related peptide subfamily. In terms of tissue distribution, expressed by the skin glands. Expression levels in inguinal glands are much higher than in granular glands.

It localises to the secreted. Its function is as follows. May produce in vitro relaxation of rat arterial smooth muscle and constriction of intestinal smooth muscle. May target bradykinin receptors (BDKRB). This is Bradykinin-related peptides from Physalaemus nattereri (Cuyaba dwarf frog).